Reading from the N-terminus, the 354-residue chain is Dihydroorotate dehydrogenase (quinone) (354 aa).

FMN is bound by residues 61-65 (AGYDK) and Ala85. Lys65 contacts substrate. 110 to 114 (NRFGF) is a binding site for substrate. Residues Asn139 and Asn170 each contribute to the FMN site. Asn170 contacts substrate. Ser173 serves as the catalytic Nucleophile. Residue Asn175 coordinates substrate. Residues Lys211 and Thr239 each coordinate FMN. 240-241 (NT) serves as a coordination point for substrate. FMN is bound by residues Gly261, Gly290, and 311–312 (YT).

Belongs to the dihydroorotate dehydrogenase family. Type 2 subfamily. As to quaternary structure, monomer. FMN serves as cofactor.

It localises to the cell membrane. It carries out the reaction (S)-dihydroorotate + a quinone = orotate + a quinol. Its pathway is pyrimidine metabolism; UMP biosynthesis via de novo pathway; orotate from (S)-dihydroorotate (quinone route): step 1/1. Its function is as follows. Catalyzes the conversion of dihydroorotate to orotate with quinone as electron acceptor. This is Dihydroorotate dehydrogenase (quinone) from Cereibacter sphaeroides (strain KD131 / KCTC 12085) (Rhodobacter sphaeroides).